A 706-amino-acid chain; its full sequence is MDSVMVKKEVLENPDHDLKRKLEENKEEENSLSTTSKSKRQVIVPVCMPKIHYSPLKTGLCYDVRMRYHAKIFTSYFEYIDPHPEDPRRIYRIYKILAENGLINDPTLSGVDDLGDLMLKIPVRAATSEEILEVHTKEHLEFIESTEKMSREELLKETEKGDSVYFNNDSYASARLPCGGAIEACKAVVEGRVKNSLAVVRPPGHHAEPQAAGGFCLFSNVAVAAKNILKNYPESVRRIMILDWDIHHGNGTQKSFYQDDQVLYVSLHRFEMGKYYPGTIQGQYDQTGEGKGEGFNCNITWPVGGVGDAEYMWAFEQVVMPMGREFKPDLVIISSGFDAADGDTIGQCHVTPSCYGHMTHMLKSLARGNLCVVLEGGYNLDAIARSALSVAKVLIGEPPDELPDPLSDPKPEVIEMIDKVIRLQSKYWNCFRRRHANSGCNFNEPINDSIISKNFPLQKAIRQQQQHYLSDEFNFVTLPLVSMDLPDNTVLCTPNISESNTIIIVVHDTSDIWAKRNVISGTIDLSSSVIIDNSLDFIKWGLDRKYGIIDVNIPLTLFEPDNYSGMITSQEVLIYLWDNYIKYFPSVAKIAFIGIGDSYSGIVHLLGHRDTRAVTKTVINFLGDKQLKPLVPLVDETLSEWYFKNSLIFSNNSHQCWKENESRKPRKKFGRVLRCDTDGLNNIIEERFEEATDFILDSFEEWSDEE.

A compositionally biased stretch (basic and acidic residues) spans 1–24 (MDSVMVKKEVLENPDHDLKRKLEE). The disordered stretch occupies residues 1–36 (MDSVMVKKEVLENPDHDLKRKLEENKEEENSLSTTS). The interval 67 to 396 (RYHAKIFTSY…ALSVAKVLIG (330 aa)) is histone deacetylase. H206 is an active-site residue.

It belongs to the histone deacetylase family. HD type 2 subfamily.

The protein localises to the nucleus. It catalyses the reaction N(6)-acetyl-L-lysyl-[histone] + H2O = L-lysyl-[histone] + acetate. In terms of biological role, responsible for the deacetylation of lysine residues on the N-terminal part of the core histones (H2A, H2B, H3 and H4). Histone deacetylation gives a tag for epigenetic repression and plays an important role in transcriptional regulation, cell cycle progression and developmental events. Histone deacetylases act via the formation of large multiprotein complexes. This Saccharomyces cerevisiae (strain ATCC 204508 / S288c) (Baker's yeast) protein is Histone deacetylase HDA1 (HDA1).